We begin with the raw amino-acid sequence, 489 residues long: mRNA cleavage and polyadenylation factor CLP1 (489 aa).

Residues E28 and 152-157 (YSGKTT) each bind ATP.

The protein belongs to the Clp1 family. Clp1 subfamily. Component of a pre-mRNA cleavage factor complex. Interacts directly with PCF11.

The protein resides in the nucleus. Its function is as follows. Required for endonucleolytic cleavage during polyadenylation-dependent pre-mRNA 3'-end formation. This Candida albicans (strain SC5314 / ATCC MYA-2876) (Yeast) protein is mRNA cleavage and polyadenylation factor CLP1.